Reading from the N-terminus, the 265-residue chain is U6 snRNA phosphodiesterase 1 (265 aa).

The tract at residues 1–22 is disordered; the sequence is MSLVCYESSSSGEDDDETISDN. H109 (proton acceptor) is an active-site residue. AMP is bound by residues 109–111 and 195–201; these read HLS and DFLLHIS. Position 197–201 (197–201) interacts with UMP; it reads LLHIS. Residue H199 is the Proton donor of the active site.

Belongs to the 2H phosphoesterase superfamily. USB1 family.

The protein localises to the nucleus. The enzyme catalyses a 3'-end uridylyl-uridine-RNA = a 3'-end 2',3'-cyclophospho-uridine-RNA + uridine. 3'-5' RNA exonuclease that trims the 3' end of oligo(U) tracts of the pre-U6 small nuclear RNA (snRNA) molecule, leading to the formation of a U6 snRNA 3' end-terminated with a 2',3'-cyclic phosphate.d. Participates in the U6 snRNA 3' end processing that prevents U6 snRNA degradation. In Schizosaccharomyces pombe (strain 972 / ATCC 24843) (Fission yeast), this protein is U6 snRNA phosphodiesterase 1.